Consider the following 117-residue polypeptide: Small ribosomal subunit protein bS6 (117 aa).

The disordered stretch occupies residues 96 to 117 (HDEGPSVQMQKRDEREGRRERR).

It belongs to the bacterial ribosomal protein bS6 family.

Functionally, binds together with bS18 to 16S ribosomal RNA. The protein is Small ribosomal subunit protein bS6 of Jannaschia sp. (strain CCS1).